Reading from the N-terminus, the 230-residue chain is Small ribosomal subunit protein uS3 (230 aa).

Positions 39 to 107 (VRKFLEKKLE…PAQINIAEIR (69 aa)) constitute a KH type-2 domain.

It belongs to the universal ribosomal protein uS3 family. Part of the 30S ribosomal subunit. Forms a tight complex with proteins S10 and S14.

Its function is as follows. Binds the lower part of the 30S subunit head. Binds mRNA in the 70S ribosome, positioning it for translation. The polypeptide is Small ribosomal subunit protein uS3 (Shewanella amazonensis (strain ATCC BAA-1098 / SB2B)).